Here is a 261-residue protein sequence, read N- to C-terminus: Cytochrome c oxidase subunit 3 (261 aa).

The Mitochondrial matrix portion of the chain corresponds to 1–15 (MTHQTHAYHMVNPSP). Residues 16–34 (WPLTGALSALLMTSGLAMW) form a helical membrane-spanning segment. Topologically, residues 35-40 (FHYNSM) are mitochondrial intermembrane. The chain crosses the membrane as a helical span at residues 41–66 (LLLTLGLMTNLLTMYQWWRDIVREST). Residues 67-72 (FQGHHT) lie on the Mitochondrial matrix side of the membrane. The helical transmembrane segment at 73 to 105 (LVVQKGLRYGMILFIISEVFFFSGFFWAFYHSS) threads the bilayer. At 106-128 (LAPTPELGGCWPPTGIHPLNPME) the chain is on the mitochondrial intermembrane side. The chain crosses the membrane as a helical span at residues 129-152 (VPLLNTSVLLASGVSITWAHHSLM). At 153–155 (EGN) the chain is on the mitochondrial matrix side. Residues 156–183 (RKHMLQALFITISLGVYFTLLQASEYYE) traverse the membrane as a helical segment. Residues 184-190 (APFTISD) are Mitochondrial intermembrane-facing. The chain crosses the membrane as a helical span at residues 191–223 (GIYGSTFFVATGFHGLHVIIGSTFLIVCFLRQL). Over 224–232 (KFHFTSNHH) the chain is Mitochondrial matrix. Residues 233 to 256 (FGFEAAAWYWHFVDVVWLFLYVSI) traverse the membrane as a helical segment. The Mitochondrial intermembrane segment spans residues 257-261 (YWWGS).

Belongs to the cytochrome c oxidase subunit 3 family. Component of the cytochrome c oxidase (complex IV, CIV), a multisubunit enzyme composed of 14 subunits. The complex is composed of a catalytic core of 3 subunits MT-CO1, MT-CO2 and MT-CO3, encoded in the mitochondrial DNA, and 11 supernumerary subunits COX4I, COX5A, COX5B, COX6A, COX6B, COX6C, COX7A, COX7B, COX7C, COX8 and NDUFA4, which are encoded in the nuclear genome. The complex exists as a monomer or a dimer and forms supercomplexes (SCs) in the inner mitochondrial membrane with NADH-ubiquinone oxidoreductase (complex I, CI) and ubiquinol-cytochrome c oxidoreductase (cytochrome b-c1 complex, complex III, CIII), resulting in different assemblies (supercomplex SCI(1)III(2)IV(1) and megacomplex MCI(2)III(2)IV(2)).

Its subcellular location is the mitochondrion inner membrane. The enzyme catalyses 4 Fe(II)-[cytochrome c] + O2 + 8 H(+)(in) = 4 Fe(III)-[cytochrome c] + 2 H2O + 4 H(+)(out). Component of the cytochrome c oxidase, the last enzyme in the mitochondrial electron transport chain which drives oxidative phosphorylation. The respiratory chain contains 3 multisubunit complexes succinate dehydrogenase (complex II, CII), ubiquinol-cytochrome c oxidoreductase (cytochrome b-c1 complex, complex III, CIII) and cytochrome c oxidase (complex IV, CIV), that cooperate to transfer electrons derived from NADH and succinate to molecular oxygen, creating an electrochemical gradient over the inner membrane that drives transmembrane transport and the ATP synthase. Cytochrome c oxidase is the component of the respiratory chain that catalyzes the reduction of oxygen to water. Electrons originating from reduced cytochrome c in the intermembrane space (IMS) are transferred via the dinuclear copper A center (CU(A)) of subunit 2 and heme A of subunit 1 to the active site in subunit 1, a binuclear center (BNC) formed by heme A3 and copper B (CU(B)). The BNC reduces molecular oxygen to 2 water molecules using 4 electrons from cytochrome c in the IMS and 4 protons from the mitochondrial matrix. The chain is Cytochrome c oxidase subunit 3 (MT-CO3) from Ceratotherium simum (White rhinoceros).